The sequence spans 426 residues: Tol-Pal system protein TolB (426 aa).

The N-terminal stretch at 1–25 (MSITPSLSRRTVMSLLAAGLSPAFA) is a signal peptide.

The protein belongs to the TolB family. In terms of assembly, the Tol-Pal system is composed of five core proteins: the inner membrane proteins TolA, TolQ and TolR, the periplasmic protein TolB and the outer membrane protein Pal. They form a network linking the inner and outer membranes and the peptidoglycan layer.

The protein resides in the periplasm. Its function is as follows. Part of the Tol-Pal system, which plays a role in outer membrane invagination during cell division and is important for maintaining outer membrane integrity. In Polaromonas sp. (strain JS666 / ATCC BAA-500), this protein is Tol-Pal system protein TolB.